The primary structure comprises 515 residues: Bifunctional purine biosynthesis protein PurH (515 aa).

One can recognise an MGS-like domain in the interval 1–145; the sequence is MTKRALISVS…KNHASVTVVV (145 aa).

It belongs to the PurH family.

It catalyses the reaction (6R)-10-formyltetrahydrofolate + 5-amino-1-(5-phospho-beta-D-ribosyl)imidazole-4-carboxamide = 5-formamido-1-(5-phospho-D-ribosyl)imidazole-4-carboxamide + (6S)-5,6,7,8-tetrahydrofolate. It carries out the reaction IMP + H2O = 5-formamido-1-(5-phospho-D-ribosyl)imidazole-4-carboxamide. It functions in the pathway purine metabolism; IMP biosynthesis via de novo pathway; 5-formamido-1-(5-phospho-D-ribosyl)imidazole-4-carboxamide from 5-amino-1-(5-phospho-D-ribosyl)imidazole-4-carboxamide (10-formyl THF route): step 1/1. Its pathway is purine metabolism; IMP biosynthesis via de novo pathway; IMP from 5-formamido-1-(5-phospho-D-ribosyl)imidazole-4-carboxamide: step 1/1. The polypeptide is Bifunctional purine biosynthesis protein PurH (Streptococcus agalactiae serotype Ia (strain ATCC 27591 / A909 / CDC SS700)).